The primary structure comprises 588 residues: Pre-mRNA-splicing ATP-dependent RNA helicase PRP28 (588 aa).

The disordered stretch occupies residues 15–94 (NKKKGLDENT…PSKQNGSKFH (80 aa)). 2 stretches are compositionally biased toward basic and acidic residues: residues 35 to 49 (NKQERSKQERLKENE) and 60 to 83 (AKVEIKKVNSRDDSFFNETNDKKR). A Phosphoserine modification is found at serine 69. A Q motif motif is present at residues 172–202 (RNWEELNIIPRDLLRVIIQELRFPSPTPIQR). In terms of domain architecture, Helicase ATP-binding spans 208 to 399 (VCNMKQYRDF…AGYMQKPVYA (192 aa)). 221–228 (ASTGSGKT) provides a ligand contact to ATP. Residues 341 to 344 (DEAD) carry the DEAD box motif. One can recognise a Helicase C-terminal domain in the interval 427–579 (KLKPIVAKYD…EAVKNKYNVG (153 aa)).

It belongs to the DEAD box helicase family. DDX23/PRP28 subfamily. In terms of assembly, component of the U5 snRNP complex, composed of at least BRR2, PRP8, PRP28, DIB1, LIN1, SMB1, SMD1, SMD2, SMD3, SME1, SMX2, SMX3, and SNU114, associated with the U5 snRNA.

Its subcellular location is the cytoplasm. The protein resides in the nucleus. It carries out the reaction ATP + H2O = ADP + phosphate + H(+). Functionally, ATP-dependent RNA helicase involved in mRNA splicing. May destabilize the U1/5'-splice site duplex to permit an effective competition for the 5'-splice site by the U6 snRNA, resulting in the switch between U1 and U6 at the 5'-splice site. May also act to unwind the U4/U6 base-pairing interaction in the U4/U6/U5 snRNP, facilitating the first covalent step of splicing. This chain is Pre-mRNA-splicing ATP-dependent RNA helicase PRP28 (PRP28), found in Saccharomyces cerevisiae (strain ATCC 204508 / S288c) (Baker's yeast).